The sequence spans 897 residues: Leucine--tRNA ligase (897 aa).

A 'HIGH' region motif is present at residues 49–59 (PYPSGKLHMGH). The 'KMSKS' region signature appears at 654-658 (KMSKS). Lys657 provides a ligand contact to ATP.

The protein belongs to the class-I aminoacyl-tRNA synthetase family.

Its subcellular location is the cytoplasm. The enzyme catalyses tRNA(Leu) + L-leucine + ATP = L-leucyl-tRNA(Leu) + AMP + diphosphate. This chain is Leucine--tRNA ligase, found in Methylibium petroleiphilum (strain ATCC BAA-1232 / LMG 22953 / PM1).